We begin with the raw amino-acid sequence, 369 residues long: Histone deacetylase 8 (369 aa).

The histone deacetylase stretch occupies residues 5-316 (LLPVYIHSAE…WTYLTALIVG (312 aa)). D93 is a substrate binding site. H135 acts as the Proton acceptor in catalysis. Residue G143 participates in substrate binding. Residues D170, H172, and D259 each contribute to the a divalent metal cation site. Residue Y298 participates in substrate binding.

The protein belongs to the histone deacetylase family. HD type 1 subfamily. It depends on a divalent metal cation as a cofactor.

The protein resides in the nucleus. Its subcellular location is the chromosome. It localises to the cytoplasm. It catalyses the reaction N(6)-acetyl-L-lysyl-[histone] + H2O = L-lysyl-[histone] + acetate. It carries out the reaction N(6)-acetyl-L-lysyl-[protein] + H2O = L-lysyl-[protein] + acetate. The catalysed reaction is N(6)-(2E)-butenoyl-L-lysyl-[protein] + H2O = (2E)-2-butenoate + L-lysyl-[protein]. Its activity is regulated as follows. Its activity is inhibited by trichostatin A (TSA) and butyrate, 2 well known histone deacetylase inhibitors. In terms of biological role, histone deacetylase that catalyzes the deacetylation of lysine residues on the N-terminal part of the core histones (H2A, H2B, H3 and H4). Histone deacetylation gives a tag for epigenetic repression and plays an important role in transcriptional regulation, cell cycle progression and developmental events. Histone deacetylases act via the formation of large multiprotein complexes. Also involved in the deacetylation of non-histone proteins. In addition to protein deacetylase activity, also has protein-lysine deacylase activity: acts as a protein decrotonylase by mediating decrotonylation ((2E)-butenoyl) of histones. In Xenopus tropicalis (Western clawed frog), this protein is Histone deacetylase 8 (hdac8).